The following is a 386-amino-acid chain: Chaperone protein DnaJ (386 aa).

The region spanning 6–71 (DYYEILGVDR…QKRARYDQFG (66 aa)) is the J domain. The CR-type zinc-finger motif lies at 144–226 (GTEKEVTVSR…CGGKGRVRKH (83 aa)). Cys157, Cys160, Cys174, Cys177, Cys200, Cys203, Cys214, and Cys217 together coordinate Zn(2+). CXXCXGXG motif repeat units lie at residues 157–164 (CPTCSGSG), 174–181 (CRQCNGTG), 200–207 (CDVCHGEG), and 214–221 (CETCGGKG).

Belongs to the DnaJ family. Homodimer. It depends on Zn(2+) as a cofactor.

It is found in the cytoplasm. Its function is as follows. Participates actively in the response to hyperosmotic and heat shock by preventing the aggregation of stress-denatured proteins and by disaggregating proteins, also in an autonomous, DnaK-independent fashion. Unfolded proteins bind initially to DnaJ; upon interaction with the DnaJ-bound protein, DnaK hydrolyzes its bound ATP, resulting in the formation of a stable complex. GrpE releases ADP from DnaK; ATP binding to DnaK triggers the release of the substrate protein, thus completing the reaction cycle. Several rounds of ATP-dependent interactions between DnaJ, DnaK and GrpE are required for fully efficient folding. Also involved, together with DnaK and GrpE, in the DNA replication of plasmids through activation of initiation proteins. This chain is Chaperone protein DnaJ, found in Acetivibrio thermocellus (strain ATCC 27405 / DSM 1237 / JCM 9322 / NBRC 103400 / NCIMB 10682 / NRRL B-4536 / VPI 7372) (Clostridium thermocellum).